Reading from the N-terminus, the 564-residue chain is MRGAFLATAAAIAGTAMADIAHMRRHGHDSFHQRRAVEQPAPEADATCGCTTEVVTSWGPPTLIPIATSSPSSTVTSEVVTTLHSTSYSTVTLVVTPSGASPNRESAPATPAVTLPTPGVTSFSTTGTYTIPATTLTVTHSTTVCGATTTELPSGTHTYGGVTTVVDRHTTVVCPYATVEPSGSTVTSVIRTTTYVCPSAGTYTIAPTTTYVPTSTVIVYPTPATITPGTYTQPAQTITVTRDNYIYVCPFTGQQLPTTAPVAPATTAVPATTTAVPATTTAVPATSSVAPSSSPSKPAAPSGAVSGQMGMTYSPYTNEGGCKDKASIISEVALLKSKGFTHVRVYSTDCGSLEFIGEAARTSGLRMIIGVFIKQSGVAGAQDQVTAISKWAQWDLVSLIVVGNESIQNHFCDASTLAGFIVSAKQSFKAAGYSGQVTTTEPINVWQANGDALCGAVDIIGANIHPFFNADVSAAEAGKFVAQEFKTLKGICPGKDVINLETGWPHSGEANGKAIPSREEQAIAIKAIADEVGSMSVFFSYFDDLWKQPGAFGVERYWGCIENF.

The signal sequence occupies residues 1 to 18 (MRGAFLATAAAIAGTAMA). A disordered region spans residues 285 to 304 (ATSSVAPSSSPSKPAAPSGA). The N-linked (GlcNAc...) asparagine glycan is linked to Asn-404. The active-site Proton donor is Glu-405. The active-site Nucleophile is the Glu-501.

The protein belongs to the glycosyl hydrolase 17 family.

Its subcellular location is the secreted. The protein resides in the cell wall. The catalysed reaction is Hydrolysis of terminal, non-reducing beta-D-glucosyl residues with release of beta-D-glucose.. It participates in glycan metabolism; cellulose degradation. Its function is as follows. Beta-glucosidases are one of a number of cellulolytic enzymes involved in the degradation of cellulosic biomass. Catalyzes the last step releasing glucose from the inhibitory cellobiose. The sequence is that of Probable beta-glucosidase btgE (btgE) from Aspergillus clavatus (strain ATCC 1007 / CBS 513.65 / DSM 816 / NCTC 3887 / NRRL 1 / QM 1276 / 107).